Consider the following 226-residue polypeptide: MKDIRIAIDGPASSGKSTVAKIIAKNLGYTYLDTGAMYRSATYLALQNGLTEENVPEILDQLSQYPISFGKAADGSPKVYVGDVDITHPIRDNQVTNNVSWVAAIPEVRQELVSQQQRIAQEGGIIMDGRDIGTVVLPDAELKIFMIASVDERAERRYKENIEKGIPADLETLKKEIAERDYKDSHREVSPLRPAEDAITFDTTGVSIDGVVEFIQEKAKKIIDKG.

10–18 (GPASSGKST) lines the ATP pocket.

The protein belongs to the cytidylate kinase family. Type 1 subfamily.

The protein localises to the cytoplasm. The enzyme catalyses CMP + ATP = CDP + ADP. It catalyses the reaction dCMP + ATP = dCDP + ADP. The sequence is that of Cytidylate kinase from Streptococcus thermophilus (strain ATCC BAA-491 / LMD-9).